Consider the following 822-residue polypeptide: MTSRFGQLTYTSFDAVGTVGGWQVKETTDALTSEETQLMLAGVRTVFRTVEPMPDYPTPEQLEAAPRRLAYSRVGETYAALWHTVPAGADSTGRPGNVFAHVLLDRTPDVAPRHRAIQWWRSPHWLCPYGATSVSRAALAEPGPEPGGVVTKDSVVAFALDTTTWRLATLFGLLDAVAAALDGGAPVVLGVESPDNAAQWIGLLSFLMSPGTAAQLSFSTFDRADQLNLHGGQVLSAVPLEDLSAVPAGMAAISEAETLSLGELGGEPHRTAGGYAIDVTPWSAMAQVVLLDPGSARRLLDDIDAVAEQVRDSGLHPAWPMAMAVAGRAEFADAEEEAHEVIAAHSPPGVAVGSAAARTISGVLSAVVGTTTADAWRAVQELPTGPGAVFADTTYLCRAVADDAWLSNSGPIPLGPRMFHGKPIPPPLRTAIGDALNPARGPERLLQVADLLVRAGVEDPRIRTTLVEDVVPRLRDAEARERVGADARLTLGAVLLNDGDANGTAIDDGLLDWLADTAPLPPPDELAQATPWDRTWTTAALRGVRAWRRGTGGAGRDAGALLWWLRMAGSADFEQTATASAWNPEDLLLAIGADPLPGAAAVRTLVAAADSPALNRLAAKVIDENGDSLAVACAAVRTIEPTVWLQQRYVETHQHAYVPLWDEVLSVVDPADVHPDFSTRLLAFALLGLFTGHPYPRACSGFAASDRLGGEAIERLMPLVGEGHLAPHAVVAISLLRAAAPPDPSHPDVTLDELAGHLAEQVATGMVGDDNDVEGVVAVMAQLSGDSAEPALRGYRKMVTKLMARRRDSPSLTARLRGGMQA.

Its function is as follows. May be involved in assembly of the ESX-1 / type VII specialized secretion system (T7SS), which exports several proteins including EsxA and EsxB. Involved in DNA conjugation in recipient (MKD8) but not donor (mc(2)155) strain. The polypeptide is Putative ESX-1 scaffolding and assembly protein SaeB (saeB) (Mycolicibacterium smegmatis (strain MKD8) (Mycobacterium smegmatis)).